The following is a 769-amino-acid chain: Probable beta-glucosidase M (769 aa).

The N-terminal stretch at 1 to 22 (MHSNLGLAGLAGLLATASVCLS) is a signal peptide. Asparagine 28, asparagine 75, and asparagine 262 each carry an N-linked (GlcNAc...) asparagine glycan. Aspartate 290 is a catalytic residue. N-linked (GlcNAc...) asparagine glycosylation is found at asparagine 318, asparagine 325, asparagine 437, and asparagine 546.

The protein belongs to the glycosyl hydrolase 3 family.

The protein localises to the secreted. The enzyme catalyses Hydrolysis of terminal, non-reducing beta-D-glucosyl residues with release of beta-D-glucose.. The protein operates within glycan metabolism; cellulose degradation. Beta-glucosidases are one of a number of cellulolytic enzymes involved in the degradation of cellulosic biomass. Catalyzes the last step releasing glucose from the inhibitory cellobiose. This is Probable beta-glucosidase M (bglM) from Neosartorya fischeri (strain ATCC 1020 / DSM 3700 / CBS 544.65 / FGSC A1164 / JCM 1740 / NRRL 181 / WB 181) (Aspergillus fischerianus).